We begin with the raw amino-acid sequence, 116 residues long: NADH-ubiquinone oxidoreductase chain 3 (116 aa).

3 helical membrane-spanning segments follow: residues 3 to 23 (LITT…TISF), 56 to 76 (FFLI…LLPL), and 87 to 107 (LTLI…IYEW).

This sequence belongs to the complex I subunit 3 family.

It is found in the mitochondrion membrane. It catalyses the reaction a ubiquinone + NADH + 5 H(+)(in) = a ubiquinol + NAD(+) + 4 H(+)(out). In terms of biological role, core subunit of the mitochondrial membrane respiratory chain NADH dehydrogenase (Complex I) that is believed to belong to the minimal assembly required for catalysis. Complex I functions in the transfer of electrons from NADH to the respiratory chain. The immediate electron acceptor for the enzyme is believed to be ubiquinone. This Oncorhynchus keta (Chum salmon) protein is NADH-ubiquinone oxidoreductase chain 3 (MT-ND3).